Consider the following 292-residue polypeptide: Manganese transport system membrane protein MntC (292 aa).

8 consecutive transmembrane segments (helical) span residues 20–40, 58–78, 96–116, 137–157, 168–188, 190–210, 226–246, and 249–269; these read ALTA…FIIL, VVIA…TGVI, SAIG…ITGM, TDLW…ILFY, VMAQ…MLLL, LVTV…MLIT, LCLA…FSVI, and VASG…AFFF.

Belongs to the ABC-3 integral membrane protein family.

The protein localises to the cell membrane. Functionally, this protein is probably a component of a manganese permease, a binding protein-dependent, ATP-driven transport system. The sequence is that of Manganese transport system membrane protein MntC (mntC) from Halalkalibacterium halodurans (strain ATCC BAA-125 / DSM 18197 / FERM 7344 / JCM 9153 / C-125) (Bacillus halodurans).